Here is a 202-residue protein sequence, read N- to C-terminus: Large ribosomal subunit protein bL25 (202 aa).

The interval 182–202 (EVEAEETEDDEAASEGEEAAE) is disordered. Acidic residues predominate over residues 183 to 202 (VEAEETEDDEAASEGEEAAE).

It belongs to the bacterial ribosomal protein bL25 family. CTC subfamily. As to quaternary structure, part of the 50S ribosomal subunit; part of the 5S rRNA/L5/L18/L25 subcomplex. Contacts the 5S rRNA. Binds to the 5S rRNA independently of L5 and L18.

In terms of biological role, this is one of the proteins that binds to the 5S RNA in the ribosome where it forms part of the central protuberance. The polypeptide is Large ribosomal subunit protein bL25 (Corynebacterium glutamicum (strain R)).